Consider the following 335-residue polypeptide: Glyceraldehyde-3-phosphate dehydrogenase 1 (335 aa).

Residues 12–13 (RI), Asp-34, Arg-78, and Ser-120 each bind NAD(+). D-glyceraldehyde 3-phosphate is bound by residues 151-153 (SCT) and Thr-182. Cys-152 functions as the Nucleophile in the catalytic mechanism. Asn-183 contributes to the NAD(+) binding site. D-glyceraldehyde 3-phosphate contacts are provided by residues Arg-197, 210 to 211 (TG), and Arg-233. Asn-315 is an NAD(+) binding site.

Belongs to the glyceraldehyde-3-phosphate dehydrogenase family. As to quaternary structure, homotetramer. Interacts with BrxC. In response to oxidative stress, the active site Cys likely reacts with bacillithiol (BSH) to form mixed disulfides to protect the Cys residue against overoxidation. S-bacillithiolation presumably leads to loss of catalytic activity. Debacillithiolation by monothiol bacilliredoxin BrxC restores the activity.

Its subcellular location is the cytoplasm. The catalysed reaction is D-glyceraldehyde 3-phosphate + phosphate + NAD(+) = (2R)-3-phospho-glyceroyl phosphate + NADH + H(+). It functions in the pathway carbohydrate degradation; glycolysis; pyruvate from D-glyceraldehyde 3-phosphate: step 1/5. In terms of biological role, involved in the glycolysis. Catalyzes the oxidative phosphorylation of glyceraldehyde 3-phosphate (G3P) to 1,3-bisphosphoglycerate (BPG) using the cofactor NAD. The first reaction step involves the formation of a hemiacetal intermediate between G3P and a cysteine residue, and this hemiacetal intermediate is then oxidized to a thioester, with concomitant reduction of NAD to NADH. The reduced NADH is then exchanged with the second NAD, and the thioester is attacked by a nucleophilic inorganic phosphate to produce BPG. This is Glyceraldehyde-3-phosphate dehydrogenase 1 from Bacillus subtilis (strain 168).